A 348-amino-acid polypeptide reads, in one-letter code: tRNA N6-adenosine threonylcarbamoyltransferase (348 aa).

The Fe cation site is built by His111 and His115. Substrate-binding positions include 134–138 (LVSGG), Asp167, Gly180, Asp184, and Asn279. Fe cation is bound at residue Asp307.

The protein belongs to the KAE1 / TsaD family. Requires Fe(2+) as cofactor.

It localises to the cytoplasm. The enzyme catalyses L-threonylcarbamoyladenylate + adenosine(37) in tRNA = N(6)-L-threonylcarbamoyladenosine(37) in tRNA + AMP + H(+). Functionally, required for the formation of a threonylcarbamoyl group on adenosine at position 37 (t(6)A37) in tRNAs that read codons beginning with adenine. Is involved in the transfer of the threonylcarbamoyl moiety of threonylcarbamoyl-AMP (TC-AMP) to the N6 group of A37, together with TsaE and TsaB. TsaD likely plays a direct catalytic role in this reaction. The sequence is that of tRNA N6-adenosine threonylcarbamoyltransferase from Synechocystis sp. (strain ATCC 27184 / PCC 6803 / Kazusa).